The chain runs to 183 residues: Dual-action ribosomal maturation protein DarP (183 aa).

Belongs to the DarP family.

It localises to the cytoplasm. Member of a network of 50S ribosomal subunit biogenesis factors which assembles along the 30S-50S interface, preventing incorrect 23S rRNA structures from forming. Promotes peptidyl transferase center (PTC) maturation. The chain is Dual-action ribosomal maturation protein DarP from Salmonella paratyphi A (strain ATCC 9150 / SARB42).